The chain runs to 405 residues: Tryptophan synthase beta chain (405 aa).

Lys95 carries the post-translational modification N6-(pyridoxal phosphate)lysine.

It belongs to the TrpB family. As to quaternary structure, tetramer of two alpha and two beta chains. Pyridoxal 5'-phosphate is required as a cofactor.

The enzyme catalyses (1S,2R)-1-C-(indol-3-yl)glycerol 3-phosphate + L-serine = D-glyceraldehyde 3-phosphate + L-tryptophan + H2O. The protein operates within amino-acid biosynthesis; L-tryptophan biosynthesis; L-tryptophan from chorismate: step 5/5. The beta subunit is responsible for the synthesis of L-tryptophan from indole and L-serine. The sequence is that of Tryptophan synthase beta chain from Pseudomonas putida (strain ATCC 700007 / DSM 6899 / JCM 31910 / BCRC 17059 / LMG 24140 / F1).